We begin with the raw amino-acid sequence, 331 residues long: Aspartate carbamoyltransferase catalytic subunit (331 aa).

Residues R76 and T77 each coordinate carbamoyl phosphate. Residue K104 coordinates L-aspartate. Residues R126, H154, and Q157 each coordinate carbamoyl phosphate. L-aspartate-binding residues include R187 and R246. Positions 287 and 288 each coordinate carbamoyl phosphate.

This sequence belongs to the aspartate/ornithine carbamoyltransferase superfamily. ATCase family. As to quaternary structure, heterododecamer (2C3:3R2) of six catalytic PyrB chains organized as two trimers (C3), and six regulatory PyrI chains organized as three dimers (R2).

The catalysed reaction is carbamoyl phosphate + L-aspartate = N-carbamoyl-L-aspartate + phosphate + H(+). It functions in the pathway pyrimidine metabolism; UMP biosynthesis via de novo pathway; (S)-dihydroorotate from bicarbonate: step 2/3. Its function is as follows. Catalyzes the condensation of carbamoyl phosphate and aspartate to form carbamoyl aspartate and inorganic phosphate, the committed step in the de novo pyrimidine nucleotide biosynthesis pathway. The protein is Aspartate carbamoyltransferase catalytic subunit of Dehalococcoides mccartyi (strain CBDB1).